The chain runs to 111 residues: Large ribosomal subunit protein uL22 (111 aa).

It belongs to the universal ribosomal protein uL22 family. In terms of assembly, part of the 50S ribosomal subunit.

In terms of biological role, this protein binds specifically to 23S rRNA; its binding is stimulated by other ribosomal proteins, e.g. L4, L17, and L20. It is important during the early stages of 50S assembly. It makes multiple contacts with different domains of the 23S rRNA in the assembled 50S subunit and ribosome. Functionally, the globular domain of the protein is located near the polypeptide exit tunnel on the outside of the subunit, while an extended beta-hairpin is found that lines the wall of the exit tunnel in the center of the 70S ribosome. This Acholeplasma laidlawii (strain PG-8A) protein is Large ribosomal subunit protein uL22.